A 417-amino-acid chain; its full sequence is Voltage-gated ClC-type chloride channel ClcB (417 aa).

The next 11 helical transmembrane spans lie at 5-25, 54-74, 146-166, 168-188, 190-210, 222-242, 258-278, 288-308, 316-336, 339-359, and 380-400; these read LLIATIIGILAALAVAGFRHA, LITPAVGGLAAGALLWGWQKM, LWIACGAAAGMASAYHAPLAG, LFIAEILFGTLMLASLGPVVI, AVVALLTTHLLSGGNALLYTV, AMIISTGLVAGVCGPLFMWLM, WQLALGGFIVGLLSLLTPAVW, FLLSPPLLSVIAGIFICKLLA, GAPGGVFTPTLFIGLSIGMLY, MWGFWLPGADEMAILLGLTGM, and MTGEYRLLPGLLIACVVASVL.

The protein belongs to the chloride channel (TC 2.A.49) family. ClcB subfamily.

The protein localises to the cell inner membrane. Probably acts as an electrical shunt for an outwardly-directed proton pump that is linked to amino acid decarboxylation, as part of the extreme acid resistance (XAR) response. The sequence is that of Voltage-gated ClC-type chloride channel ClcB from Citrobacter koseri (strain ATCC BAA-895 / CDC 4225-83 / SGSC4696).